The sequence spans 362 residues: UDP-N-acetylglucosamine--N-acetylmuramyl-(pentapeptide) pyrophosphoryl-undecaprenol N-acetylglucosamine transferase (362 aa).

UDP-N-acetyl-alpha-D-glucosamine is bound by residues 15 to 17 (TGG), Asn-127, Arg-165, Ser-191, Ile-247, 266 to 271 (ALTVSE), and Gln-292.

This sequence belongs to the glycosyltransferase 28 family. MurG subfamily.

The protein resides in the cell inner membrane. It catalyses the reaction di-trans,octa-cis-undecaprenyl diphospho-N-acetyl-alpha-D-muramoyl-L-alanyl-D-glutamyl-meso-2,6-diaminopimeloyl-D-alanyl-D-alanine + UDP-N-acetyl-alpha-D-glucosamine = di-trans,octa-cis-undecaprenyl diphospho-[N-acetyl-alpha-D-glucosaminyl-(1-&gt;4)]-N-acetyl-alpha-D-muramoyl-L-alanyl-D-glutamyl-meso-2,6-diaminopimeloyl-D-alanyl-D-alanine + UDP + H(+). The protein operates within cell wall biogenesis; peptidoglycan biosynthesis. Its function is as follows. Cell wall formation. Catalyzes the transfer of a GlcNAc subunit on undecaprenyl-pyrophosphoryl-MurNAc-pentapeptide (lipid intermediate I) to form undecaprenyl-pyrophosphoryl-MurNAc-(pentapeptide)GlcNAc (lipid intermediate II). The sequence is that of UDP-N-acetylglucosamine--N-acetylmuramyl-(pentapeptide) pyrophosphoryl-undecaprenol N-acetylglucosamine transferase from Shewanella putrefaciens (strain CN-32 / ATCC BAA-453).